The chain runs to 345 residues: MKFNAAHYLLPLLPALVLSTRQDYEELEKQLKEVFKERSTVLRQLTKTSRELDGIKVNLQSLKNDEQSSKTDVQKLLELGQRQREEMKSLQEALQNQLKETSEKAEKHQATINFLKTEVERKSKMIRDLQNENKSLKNKLLSGSKLCGIHAEESKKIQAQLKELRYGKKDLLFKAQQLTELEQKLAVAKNELEKAALDRESQMKAMKETVQLCLSSVFRDQPPPLSLMPSNPTQMLHPPRTVASRIPEARTKSKPQPSSPGHHDSSQVQATKEESRRPSVCGPQDEGSSCLVKHEEGPQSNSTAESELTTQKLQMPICSECEEKKGPENPSASFDGTPAREEKLL.

The signal sequence occupies residues 1–19; it reads MKFNAAHYLLPLLPALVLS. Residues 16–211 are a coiled coil; it reads LVLSTRQDYE…QMKAMKETVQ (196 aa). N-linked (GlcNAc...) asparagine glycosylation occurs at N133. A leucine-zipper region spans residues 164-192; sequence LRYGKKDLLFKAQQLTELEQKLAVAKNEL. A disordered region spans residues 223–345; the sequence is PPLSLMPSNP…GTPAREEKLL (123 aa). Residues 261–277 show a composition bias toward basic and acidic residues; that stretch reads GHHDSSQVQATKEESRR. Residues 298–313 show a composition bias toward polar residues; that stretch reads PQSNSTAESELTTQKL. N-linked (GlcNAc...) asparagine glycosylation is present at N301.

In terms of tissue distribution, expression found only in the brain and spinal cord.

It localises to the secreted. This chain is Leucine zipper protein 2 (Luzp2), found in Mus musculus (Mouse).